A 613-amino-acid chain; its full sequence is tRNA 5-methylaminomethyl-2-thiouridine biosynthesis bifunctional protein MnmC (613 aa).

The interval 1–225 (MKKAKLIFKD…KREMIKAYLE (225 aa)) is tRNA (mnm(5)s(2)U34)-methyltransferase. The interval 252–613 (IGAGISSAVL…FLVRKLKKGL (362 aa)) is FAD-dependent cmnm(5)s(2)U34 oxidoreductase.

It in the N-terminal section; belongs to the methyltransferase superfamily. tRNA (mnm(5)s(2)U34)-methyltransferase family. In the C-terminal section; belongs to the DAO family. FAD serves as cofactor.

The protein resides in the cytoplasm. The catalysed reaction is 5-aminomethyl-2-thiouridine(34) in tRNA + S-adenosyl-L-methionine = 5-methylaminomethyl-2-thiouridine(34) in tRNA + S-adenosyl-L-homocysteine + H(+). In terms of biological role, catalyzes the last two steps in the biosynthesis of 5-methylaminomethyl-2-thiouridine (mnm(5)s(2)U) at the wobble position (U34) in tRNA. Catalyzes the FAD-dependent demodification of cmnm(5)s(2)U34 to nm(5)s(2)U34, followed by the transfer of a methyl group from S-adenosyl-L-methionine to nm(5)s(2)U34, to form mnm(5)s(2)U34. The sequence is that of tRNA 5-methylaminomethyl-2-thiouridine biosynthesis bifunctional protein MnmC from Campylobacter jejuni subsp. doylei (strain ATCC BAA-1458 / RM4099 / 269.97).